Here is a 435-residue protein sequence, read N- to C-terminus: 5'-deoxyadenosine deaminase (435 aa).

Zn(2+)-binding residues include H64 and H66. Residues E93 and H185 each coordinate substrate. Position 212 (H212) interacts with Zn(2+). Residues E215 and D300 each contribute to the substrate site. Residue D300 coordinates Zn(2+).

The protein belongs to the metallo-dependent hydrolases superfamily. MTA/SAH deaminase family. As to quaternary structure, homotetramer. The cofactor is Zn(2+).

The enzyme catalyses 5'-deoxyadenosine + H2O + H(+) = 5'-deoxyinosine + NH4(+). It carries out the reaction S-adenosyl-L-homocysteine + H2O + H(+) = S-inosyl-L-homocysteine + NH4(+). The catalysed reaction is S-methyl-5'-thioadenosine + H2O + H(+) = S-methyl-5'-thioinosine + NH4(+). It catalyses the reaction adenosine + H2O + H(+) = inosine + NH4(+). It participates in amino-acid biosynthesis; S-adenosyl-L-methionine biosynthesis. In terms of biological role, catalyzes the deamination of three SAM-derived enzymatic products, namely 5'-deoxyadenosine, S-adenosyl-L-homocysteine, and 5'-methylthioadenosine, to produce the inosine analogs. Can also deaminate adenosine. The preferred substrate for this enzyme is 5'-deoxyadenosine, but all these substrates are efficiently deaminated. Likely functions in a S-adenosyl-L-methionine (SAM) recycling pathway from S-adenosyl-L-homocysteine (SAH) produced from SAM-dependent methylation reactions. May also be involved in the recycling of 5'-deoxyadenosine, whereupon the 5'-deoxyribose moiety of 5'-deoxyinosine is further metabolized to deoxyhexoses used for the biosynthesis of aromatic amino acids in methanogens. This chain is 5'-deoxyadenosine deaminase, found in Methanobrevibacter smithii (strain ATCC 35061 / DSM 861 / OCM 144 / PS).